Reading from the N-terminus, the 497-residue chain is ADP-dependent glucokinase (497 aa).

An N-terminal signal peptide occupies residues 1-22 (MALWRGSAYAGFLALAVGCVFL). The ADPK domain occupies 52-497 (SPEGRLAAAW…LFYSEVHPHL (446 aa)). The Mg(2+) site is built by E297, E328, and D481. Catalysis depends on D481, which acts as the Proton acceptor.

It belongs to the ADP-dependent glucokinase family. In terms of assembly, monomer. Requires Mg(2+) as cofactor.

The protein resides in the secreted. The catalysed reaction is D-glucose + ADP = D-glucose 6-phosphate + AMP + H(+). Its pathway is carbohydrate degradation; glycolysis. Its function is as follows. Catalyzes the phosphorylation of D-glucose to D-glucose 6-phosphate using ADP as the phosphate donor. GDP and CDP can replace ADP, but with reduced efficiency. This chain is ADP-dependent glucokinase (ADPGK), found in Bos taurus (Bovine).